The chain runs to 1460 residues: Nucleoporin NUP159 (1460 aa).

Positions 1 to 500 (MSSLKDEVPT…SEQDATDPAS (500 aa)) are interaction with DBP5. One copy of the FG 1 repeat lies at 228-231 (AVFG). The PXFG 1 repeat unit spans residues 267-270 (PPFG). The interval 401-435 (KSLSPTSEKIPIAGQEQEEKKKNNESSKALSENPF) is disordered. Phosphoserine is present on S404. The SXFGXPXFG 1 repeat unit spans residues 462-470 (STFGAPSFG). A disordered region spans residues 483–504 (STSTGVASSEQDATDPASAKPV). The segment at 497 to 701 (DPASAKPVFG…KPNTSTKPKT (205 aa)) is interactions with CRM1 and GLE1. One copy of the SXFGXPXFG 2; approximate repeat lies at 503-511 (PVFGKPAFG). The SXFGXPXFG 3; approximate repeat unit spans residues 522–530 (YAFGKPSFG). Residues 532–535 (PSFG) form a PXFG 2 repeat. Residues 533-619 (SFGSGKSSVE…SAFGTASSNE (87 aa)) are disordered. Composition is skewed to polar residues over residues 536-546 (SGKSSVESPAS), 556-567 (GTPSFGSGNSSV), 582-593 (GTPSFGSGNSSA), and 607-619 (FGTSAFGTASSNE). An SXFGXPXFG 4 repeat occupies 548–556 (SAFGKPSFG). The PXFG 3 repeat unit spans residues 558-561 (PSFG). An SXFGXPXFG 5 repeat occupies 574–582 (SAFGKPSFG). The PXFG 4 repeat unit spans residues 584-587 (PSFG). Residues 600-608 (SAFGKPSFG) form an SXFGXPXFG 6 repeat. One copy of the SXFG 1 repeat lies at 610-613 (SAFG). Residues 624–632 (SIFGKAAFG) form an SXFGXPXFG 7; approximate repeat. One copy of the FG 2 repeat lies at 642–645 (ELFG). Residues 647 to 704 (NFTISKPTVDSPKEVDSTSPFPSSGDQSEDESKSDVDSSSTPFGTKPNTSTKPKTNAF) are disordered. Residue S657 is modified to Phosphoserine. Over residues 683–704 (DSSSTPFGTKPNTSTKPKTNAF) the composition is skewed to low complexity. The stretch at 687-690 (TPFG) is one FG 3 repeat. One copy of the FXFG 1 repeat lies at 704-707 (FDFG). The SXFG 2 repeat unit spans residues 709-712 (SSFG). Position 724 is a phosphoserine (S724). Polar residues-rich tracts occupy residues 727-750 (TFKFGTQASPFSSQLGNKSPFSSF), 757-767 (NGSLSKGSTSE), and 778-800 (NGPNVSGNDLTDSTVEQTSSTRL). The segment at 727 to 824 (TFKFGTQASP…EAQKSPIGKL (98 aa)) is disordered. The FXFG 2 repeat unit spans residues 728 to 731 (FKFG). Phosphoserine is present on residues S735 and S745. T803 is subject to Phosphothreonine. Residues 804–814 (PSDEDGEVVEE) are compositionally biased toward acidic residues. Phosphoserine occurs at positions 805 and 819. The PXFG 5 repeat unit spans residues 842–845 (PVFG). Residues 861–889 (TNITKPSSTTPAFSFGNSTMNKSNTSTVS) show a composition bias toward polar residues. Residues 861 to 1092 (TNITKPSSTT…DINTDELPHG (232 aa)) are disordered. An FXFG 3 repeat occupies 873-876 (FSFG). S889 bears the Phosphoserine mark. Residues 917 to 936 (AKEERTGESSKKDHNDDPKD) show a composition bias toward basic and acidic residues. S940 carries the post-translational modification Phosphoserine. Over residues 942–958 (SEISVRTSESAFDTTAN) the composition is skewed to polar residues. Basic and acidic residues-rich tracts occupy residues 960–1002 (EIPK…KNNE), 1017–1027 (ALKKDNEKENF), 1035–1061 (QFEDHQSSEEDASEKDSRQSSEVKESD), and 1068–1092 (SDRDESISESYDKLEDINTDELPHG). The tract at residues 1086–1175 (TDELPHGGEA…TCNFSVQTFE (90 aa)) is interaction with DYN2. Residues 1223–1460 (AEFTVLMENI…DFFKNLNMAK (238 aa)) are interaction with NUP82. Coiled-coil stretches lie at residues 1279–1320 (EQMQ…YLFL) and 1383–1418 (AKLAKESLARDGLLKEIKLLREQVSRLQLEEKGKKA).

As to quaternary structure, component of the nuclear pore complex (NPC). NPC constitutes the exclusive means of nucleocytoplasmic transport. NPCs allow the passive diffusion of ions and small molecules and the active, nuclear transport receptor-mediated bidirectional transport of macromolecules such as proteins, RNAs, ribonucleoparticles (RNPs), and ribosomal subunits across the nuclear envelope. Due to its 8-fold rotational symmetry, all subunits are present with 8 copies or multiples thereof. Part of the NUP82 subcomplex, interacts with NUP82 through its C-terminal coiled coil. This subcomplex is the base for interactions with NUP116 and GLE2, with NUP42 and GLE1 and with DYN2. Interacts directly with DYN2. Interacts through its FG repeats with karyopherins, such as heterodimeric mRNA transport factor MEX67/MTR2, CRM1 (XPO1), and PSE1 (GSP1-GDP dependent). Interaction with CRM1 (XPO1) is GSP1-GTP dependent and stimulated by RNA1. NUP159 also interacts with GLE1 and the ATP-dependent RNA helicase DBP5.

The protein localises to the nucleus. Its subcellular location is the nuclear pore complex. It localises to the nucleus membrane. In terms of biological role, functions as a component of the nuclear pore complex (NPC). NPC components, collectively referred to as nucleoporins (NUPs), can play the role of both NPC structural components and of docking or interaction partners for transiently associated nuclear transport factors. Active directional transport is assured by both, a Phe-Gly (FG) repeat affinity gradient for these transport factors across the NPC and a transport cofactor concentration gradient across the nuclear envelope (GSP1 and GSP2 GTPases associated predominantly with GTP in the nucleus, with GDP in the cytoplasm). NUP159 plays an important role in several nuclear export pathways including poly(A)+ RNA, pre-ribosome, and protein export. In Saccharomyces cerevisiae (strain ATCC 204508 / S288c) (Baker's yeast), this protein is Nucleoporin NUP159 (NUP159).